The sequence spans 953 residues: Coatomer subunit beta (953 aa).

Thr-2 is modified (N-acetylthreonine). HEAT repeat units follow at residues 96 to 131 (HEMI…KEAE), 132 to 168 (LLEP…NFEN), 240 to 276 (SERA…SAPT), 277 to 314 (AIKA…HPAH), 316 to 353 (RVLQ…SRNV), and 396 to 433 (DMAA…RFDN). Position 494 is an N6-acetyllysine (Lys-494).

Oligomeric complex that consists of at least the alpha, beta, beta', gamma, delta, epsilon and zeta subunits. Interacts with SCYL1. Interacts with CAPN8. Interacts with COPG1. Interacts with ARF1 (myristoylated); this interaction is required for binding of COPB1 to Golgi membranes. Interacts (via trunk domain) with ARF1 (via switch I region); the interaction is direct. Interacts with KCNK2 (via N-terminus); this interaction increases the channel-mediated whole cell currents and promotes plasma membrane expression of KCNK2. Interacts with PRKCE. Interacts with STX17. Interacts with TMEM115. Interacts with TMEM41B. Post-translationally, proteolytically cleaved between Ser-528 and Ser-529 by CAPN8.

Its subcellular location is the cytoplasm. It localises to the golgi apparatus membrane. The protein resides in the cytoplasmic vesicle. It is found in the COPI-coated vesicle membrane. The protein localises to the cell membrane. Its subcellular location is the endoplasmic reticulum-Golgi intermediate compartment. It localises to the microsome membrane. In terms of biological role, the coatomer is a cytosolic protein complex that binds to dilysine motifs and reversibly associates with Golgi non-clathrin-coated vesicles, which further mediate biosynthetic protein transport from the ER, via the Golgi up to the trans Golgi network. Coatomer complex is required for budding from Golgi membranes, and is essential for the retrograde Golgi-to-ER transport of dilysine-tagged proteins. In mammals, the coatomer can only be recruited by membranes associated to ADP-ribosylation factors (ARFs), which are small GTP-binding proteins; the complex also influences the Golgi structural integrity, as well as the processing, activity, and endocytic recycling of LDL receptors. Involved in the Golgi disassembly and reassembly processes during cell cycle. Involved in autophagy by playing a role in early endosome function. Plays a role in organellar compartmentalization of secretory compartments including endoplasmic reticulum (ER)-Golgi intermediate compartment (ERGIC), Golgi, trans-Golgi network (TGN) and recycling endosomes, and in biosynthetic transport of CAV1. Plays a functional role in facilitating the transport of kappa-type opioid receptor mRNAs into axons and enhances translation of these proteins in the axonal compartment of dorsal root ganglion (DRG) cells. Required for limiting lipid storage in lipid droplets. Involved in lipid homeostasis by regulating the presence of perilipin family members PLIN2 and PLIN3 at the lipid droplet surface and promoting the association of adipocyte triglyceride lipase (PNPLA2) with the lipid droplet surface to mediate lipolysis. The sequence is that of Coatomer subunit beta (Copb1) from Rattus norvegicus (Rat).